The sequence spans 418 residues: Serpin A9 (418 aa).

The N-terminal stretch at 1–25 (MGSSSFYRVLLLVGFCAPIFCMLSS) is a signal peptide. N-linked (GlcNAc...) asparagine glycans are attached at residues asparagine 103, asparagine 213, and asparagine 224.

This sequence belongs to the serpin family.

Its subcellular location is the secreted. The sequence is that of Serpin A9 (Serpina9) from Mus musculus (Mouse).